The chain runs to 363 residues: Phosphoserine aminotransferase (363 aa).

Position 42 (R42) interacts with L-glutamate. Pyridoxal 5'-phosphate is bound by residues G76–R77, W102, T156, D175, and Q198. K199 carries the post-translational modification N6-(pyridoxal phosphate)lysine. N240–T241 serves as a coordination point for pyridoxal 5'-phosphate.

Belongs to the class-V pyridoxal-phosphate-dependent aminotransferase family. SerC subfamily. Homodimer. Pyridoxal 5'-phosphate is required as a cofactor.

The protein resides in the cytoplasm. The enzyme catalyses O-phospho-L-serine + 2-oxoglutarate = 3-phosphooxypyruvate + L-glutamate. It carries out the reaction 4-(phosphooxy)-L-threonine + 2-oxoglutarate = (R)-3-hydroxy-2-oxo-4-phosphooxybutanoate + L-glutamate. Its pathway is amino-acid biosynthesis; L-serine biosynthesis; L-serine from 3-phospho-D-glycerate: step 2/3. The protein operates within cofactor biosynthesis; pyridoxine 5'-phosphate biosynthesis; pyridoxine 5'-phosphate from D-erythrose 4-phosphate: step 3/5. Catalyzes the reversible conversion of 3-phosphohydroxypyruvate to phosphoserine and of 3-hydroxy-2-oxo-4-phosphonooxybutanoate to phosphohydroxythreonine. The sequence is that of Phosphoserine aminotransferase from Shewanella frigidimarina (strain NCIMB 400).